The following is a 253-amino-acid chain: NAD-dependent protein deacetylase (253 aa).

The 251-residue stretch at 3–253 (APSLSSGVEQ…GETLGPFVGN (251 aa)) folds into the Deacetylase sirtuin-type domain. NAD(+) is bound by residues alanine 29, threonine 33, phenylalanine 40, arginine 41, glutamine 106, isoleucine 108, aspartate 109, and histidine 126. Phenylalanine 40 contacts nicotinamide. Positions 108 and 109 each coordinate nicotinamide. Residue histidine 126 is the Proton acceptor of the active site. Cysteine 134, cysteine 137, cysteine 159, and cysteine 162 together coordinate Zn(2+). Serine 200, serine 201, asparagine 225, aspartate 242, and isoleucine 243 together coordinate NAD(+).

This sequence belongs to the sirtuin family. Class U subfamily. Requires Zn(2+) as cofactor.

The protein resides in the cytoplasm. It carries out the reaction N(6)-acetyl-L-lysyl-[protein] + NAD(+) + H2O = 2''-O-acetyl-ADP-D-ribose + nicotinamide + L-lysyl-[protein]. In terms of biological role, NAD-dependent protein deacetylase which modulates the activities of several enzymes which are inactive in their acetylated form. This is NAD-dependent protein deacetylase from Rhodopseudomonas palustris (strain ATCC BAA-98 / CGA009).